The sequence spans 193 residues: Glycerol-3-phosphate acyltransferase (193 aa).

Transmembrane regions (helical) follow at residues 2–22 (AFII…AVIV), 51–71 (QAAF…VLIA), 78–98 (GVSL…PVYF), 112–132 (VLLG…VIVV), and 154–174 (IIAG…LLIW).

This sequence belongs to the PlsY family. In terms of assembly, probably interacts with PlsX.

It localises to the cell inner membrane. It carries out the reaction an acyl phosphate + sn-glycerol 3-phosphate = a 1-acyl-sn-glycero-3-phosphate + phosphate. It participates in lipid metabolism; phospholipid metabolism. In terms of biological role, catalyzes the transfer of an acyl group from acyl-phosphate (acyl-PO(4)) to glycerol-3-phosphate (G3P) to form lysophosphatidic acid (LPA). This enzyme utilizes acyl-phosphate as fatty acyl donor, but not acyl-CoA or acyl-ACP. The polypeptide is Glycerol-3-phosphate acyltransferase (Coxiella burnetii (strain CbuG_Q212) (Coxiella burnetii (strain Q212))).